Consider the following 157-residue polypeptide: Small ribosomal subunit protein bS16 (157 aa).

The disordered stretch occupies residues 114–157 (NEGPTAEAITEKKKKAKEEAAAKAAAEAEAAAKAEEAPAEEAAE).

This sequence belongs to the bacterial ribosomal protein bS16 family.

This is Small ribosomal subunit protein bS16 from Corynebacterium diphtheriae (strain ATCC 700971 / NCTC 13129 / Biotype gravis).